Reading from the N-terminus, the 907-residue chain is MLASLIGGIFGTKNERELKRMRKIVEQINALEPTISALSDADLSAKTPEFKQRYNNGESLDKLLPEAFAVCREAAKRVMGMRHYDVQLIGGITLHEGKIAEMRTGEGKTLMGTLACYLNALSGEGVHVITVNDYLAQRDAELNRPLFEFLGLSIGTIYSMQEPAEKAAAYLADITYGTNNEFGFDYLRDNMVFSLAEKKQRGLHYAIIDEVDSILIDEARTPLIISGQSEDSSHLYTAINTIPPKLRPQKEEKVADGGHFWIDEKQRSVEMTEIGYETVEQELIQMGLLAEGESLYSATNLNLVHHVSAAIRAHFLFQRDVHYIIHDGEVIIVDEHTGRTMPGRRWSEGLHQAVEAKEGLTIQPENQTLATTTFQNYFRLYKKLSGMTGTADTEAAEMKEIYGLDVVIIPTHRPMIRNDQNDLIYLNRNGKYNAIIQEIMNIRQQGVAPILIGTATIEASEILSSKLKQAGIHHEVLNAKQHEREADIIAQAGSPNAVTIATNMAGRGTDIILGGNWKAKLAKLENPTPEDEARLKAQWEQDHEDVLQAGGLHIIGSERHESRRIDNQLRGRAGRQGDPGVSRFYLSLEDDLMRIFAGDRVVAMMRAMGLKEDEAIEHKMVSRSIENAQRKVEARNFDIRKNLLKYDDVNNEQRKIIYSQRDEILAENTLQEYVEEMHREVMQAMIANFIPPESIHDQWDVEGLENALRIDLGIELPVQEWLEQDRRLDEEGLVERISDEVIARYRQRRAQMGDESAAMLERHFVLNSLDRHWKDHLAAMDYLRQGIHLRGYAQKNPEQEYKKEAFNLFVNMLGVIKTDVVTDLSRVHIPTPEELAEMEAQQQQQAEAMKLSFEHDDVDGLTGEVTASQEALNESATEQQTFPVPESRNAPCPCGSGLKYKQCHGKI.

Residues Gln-87, 105 to 109 (GEGKT), and Asp-510 contribute to the ATP site. Positions 892, 894, 903, and 904 each coordinate Zn(2+).

Belongs to the SecA family. As to quaternary structure, monomer and homodimer. Part of the essential Sec protein translocation apparatus which comprises SecA, SecYEG and auxiliary proteins SecDF-YajC and YidC. Requires Zn(2+) as cofactor.

The protein localises to the cell inner membrane. Its subcellular location is the cytoplasm. It carries out the reaction ATP + H2O + cellular proteinSide 1 = ADP + phosphate + cellular proteinSide 2.. In terms of biological role, part of the Sec protein translocase complex. Interacts with the SecYEG preprotein conducting channel. Has a central role in coupling the hydrolysis of ATP to the transfer of proteins into and across the cell membrane, serving both as a receptor for the preprotein-SecB complex and as an ATP-driven molecular motor driving the stepwise translocation of polypeptide chains across the membrane. In Acinetobacter baumannii (strain ATCC 17978 / DSM 105126 / CIP 53.77 / LMG 1025 / NCDC KC755 / 5377), this protein is Protein translocase subunit SecA.